The sequence spans 626 residues: Chaperone protein DnaK (626 aa).

Thr197 is subject to Phosphothreonine; by autocatalysis. Basic and acidic residues-rich tracts occupy residues Asp512–Glu528 and Gln539–Ile551. 2 disordered regions span residues Asp512–Ile551 and Asp601–Glu626.

The protein belongs to the heat shock protein 70 family.

Its function is as follows. Acts as a chaperone. The sequence is that of Chaperone protein DnaK from Campylobacter fetus subsp. fetus (strain 82-40).